Consider the following 310-residue polypeptide: Ribosomal RNA small subunit methyltransferase H (310 aa).

Residues Ala33–His35, Asp53, Phe79, Asp100, and Gln107 each bind S-adenosyl-L-methionine.

It belongs to the methyltransferase superfamily. RsmH family.

Its subcellular location is the cytoplasm. It carries out the reaction cytidine(1402) in 16S rRNA + S-adenosyl-L-methionine = N(4)-methylcytidine(1402) in 16S rRNA + S-adenosyl-L-homocysteine + H(+). Functionally, specifically methylates the N4 position of cytidine in position 1402 (C1402) of 16S rRNA. The sequence is that of Ribosomal RNA small subunit methyltransferase H from Clostridium botulinum (strain Eklund 17B / Type B).